We begin with the raw amino-acid sequence, 172 residues long: 3-hydroxydecanoyl-[acyl-carrier-protein] dehydratase (172 aa).

The active site involves H71.

The protein belongs to the thioester dehydratase family. FabA subfamily. In terms of assembly, homodimer.

It is found in the cytoplasm. It catalyses the reaction a (3R)-hydroxyacyl-[ACP] = a (2E)-enoyl-[ACP] + H2O. It carries out the reaction (3R)-hydroxydecanoyl-[ACP] = (2E)-decenoyl-[ACP] + H2O. The catalysed reaction is (2E)-decenoyl-[ACP] = (3Z)-decenoyl-[ACP]. It functions in the pathway lipid metabolism; fatty acid biosynthesis. In terms of biological role, necessary for the introduction of cis unsaturation into fatty acids. Catalyzes the dehydration of (3R)-3-hydroxydecanoyl-ACP to E-(2)-decenoyl-ACP and then its isomerization to Z-(3)-decenoyl-ACP. Can catalyze the dehydratase reaction for beta-hydroxyacyl-ACPs with saturated chain lengths up to 16:0, being most active on intermediate chain length. This is 3-hydroxydecanoyl-[acyl-carrier-protein] dehydratase from Escherichia coli O127:H6 (strain E2348/69 / EPEC).